Here is a 257-residue protein sequence, read N- to C-terminus: Putative carboxymethylenebutenolidase (257 aa).

Active-site residues include Cys-148, Asp-195, and His-226.

Belongs to the dienelactone hydrolase family.

It catalyses the reaction 2-(5-oxo-2,5-dihydrofuran-2-ylidene)acetate + H2O = 4-oxohex-2-enedioate + H(+). The sequence is that of Putative carboxymethylenebutenolidase from Saccharolobus solfataricus (strain ATCC 35092 / DSM 1617 / JCM 11322 / P2) (Sulfolobus solfataricus).